Here is a 104-residue protein sequence, read N- to C-terminus: Large ribosomal subunit protein uL24 (104 aa).

This sequence belongs to the universal ribosomal protein uL24 family. Part of the 50S ribosomal subunit.

In terms of biological role, one of two assembly initiator proteins, it binds directly to the 5'-end of the 23S rRNA, where it nucleates assembly of the 50S subunit. Its function is as follows. One of the proteins that surrounds the polypeptide exit tunnel on the outside of the subunit. In Shigella flexneri, this protein is Large ribosomal subunit protein uL24.